Consider the following 115-residue polypeptide: Phosphoribosyl-AMP cyclohydrolase (115 aa).

D80 lines the Mg(2+) pocket. Position 81 (C81) interacts with Zn(2+). The Mg(2+) site is built by D82 and D84. Zn(2+) contacts are provided by C97 and C104.

This sequence belongs to the PRA-CH family. In terms of assembly, homodimer. It depends on Mg(2+) as a cofactor. Zn(2+) is required as a cofactor.

The protein localises to the cytoplasm. It catalyses the reaction 1-(5-phospho-beta-D-ribosyl)-5'-AMP + H2O = 1-(5-phospho-beta-D-ribosyl)-5-[(5-phospho-beta-D-ribosylamino)methylideneamino]imidazole-4-carboxamide. The protein operates within amino-acid biosynthesis; L-histidine biosynthesis; L-histidine from 5-phospho-alpha-D-ribose 1-diphosphate: step 3/9. In terms of biological role, catalyzes the hydrolysis of the adenine ring of phosphoribosyl-AMP. The chain is Phosphoribosyl-AMP cyclohydrolase from Mycobacterium sp. (strain MCS).